Here is a 523-residue protein sequence, read N- to C-terminus: Glycerate kinase (523 aa).

Ser-60 carries the post-translational modification Phosphoserine.

It belongs to the glycerate kinase type-2 family. In terms of tissue distribution, widely expressed.

The protein localises to the cytoplasm. The protein resides in the mitochondrion. The catalysed reaction is (R)-glycerate + ATP = (2R)-3-phosphoglycerate + ADP + H(+). This Homo sapiens (Human) protein is Glycerate kinase (GLYCTK).